The chain runs to 580 residues: PTS system fructose-specific EIIB'BC component (580 aa).

PTS EIIB type-2 domains lie at 3–100 and 124–221; these read MKIA…QAAE and KKIV…NAFA. Residues cysteine 11 and cysteine 132 each act as phosphocysteine intermediate; for EIIB activity in the active site. Residues cysteine 11 and cysteine 132 each carry the phosphocysteine; by EIIA modification. A PTS EIIC type-2 domain is found at 244–579; the sequence is VYKHLMTGVS…KKSAQAKAVA (336 aa). Helical transmembrane passes span 254–274, 292–312, 322–342, 367–387, 408–428, 448–468, 480–500, 507–527, and 537–557; these read HMLPVVVAGGLIIALSFVFGI, GGSAFALMIPVLAGYIAFSIA, IGGMLASSTGAGFLGGIVAGF, ILIIPFIASLFTGLVMIYVVG, NAILLGIVLGAMMCFDLGGPV, MAAIMAAGMVPALGMGLATFI, AGKASFVLGLCFISEGAIPFA, VIPACMVGGAVTGALSMLFGA, and FVLLIPNAISPVLLYLVAIAV.

Its subcellular location is the cell inner membrane. The catalysed reaction is D-fructose(out) + N(pros)-phospho-L-histidyl-[protein] = D-fructose 1-phosphate(in) + L-histidyl-[protein]. Functionally, the phosphoenolpyruvate-dependent sugar phosphotransferase system (sugar PTS), a major carbohydrate active transport system, catalyzes the phosphorylation of incoming sugar substrates concomitantly with their translocation across the cell membrane. The enzyme II FruAB PTS system is involved in fructose transport. The chain is PTS system fructose-specific EIIB'BC component from Vibrio cholerae serotype O1 (strain ATCC 39315 / El Tor Inaba N16961).